The sequence spans 69 residues: Neurotoxin Cex7 (69 aa).

A signal peptide is located at residue Ala1. In terms of domain architecture, LCN-type CS-alpha/beta spans 2–67 (REGYLVSKST…TYPIPGKSCG (66 aa)). Cystine bridges form between Cys13/Cys66, Cys17/Cys42, Cys26/Cys47, and Cys30/Cys49. The residue at position 66 (Cys66) is a Cysteine amide. The propeptide occupies 67-69 (GKK).

This sequence belongs to the long (4 C-C) scorpion toxin superfamily. Sodium channel inhibitor family. Beta subfamily. In terms of tissue distribution, expressed by the venom gland.

It is found in the secreted. In terms of biological role, beta toxins bind voltage-independently at site-4 of sodium channels (Nav) and shift the voltage of activation toward more negative potentials thereby affecting sodium channel activation and promoting spontaneous and repetitive firing. In Centruroides exilicauda (Bark scorpion), this protein is Neurotoxin Cex7.